A 140-amino-acid chain; its full sequence is Phosphoribosyl-AMP cyclohydrolase (140 aa).

Asp-78 contributes to the Mg(2+) binding site. A Zn(2+)-binding site is contributed by Cys-79. 2 residues coordinate Mg(2+): Asp-80 and Asp-82. 2 residues coordinate Zn(2+): Cys-96 and Cys-103.

This sequence belongs to the PRA-CH family. As to quaternary structure, homodimer. Mg(2+) is required as a cofactor. Zn(2+) serves as cofactor.

The protein resides in the cytoplasm. The catalysed reaction is 1-(5-phospho-beta-D-ribosyl)-5'-AMP + H2O = 1-(5-phospho-beta-D-ribosyl)-5-[(5-phospho-beta-D-ribosylamino)methylideneamino]imidazole-4-carboxamide. Its pathway is amino-acid biosynthesis; L-histidine biosynthesis; L-histidine from 5-phospho-alpha-D-ribose 1-diphosphate: step 3/9. Its function is as follows. Catalyzes the hydrolysis of the adenine ring of phosphoribosyl-AMP. The protein is Phosphoribosyl-AMP cyclohydrolase of Ralstonia pickettii (strain 12J).